Consider the following 61-residue polypeptide: Large ribosomal subunit protein uL30 (61 aa).

The protein belongs to the universal ribosomal protein uL30 family. In terms of assembly, part of the 50S ribosomal subunit.

This Rhizorhabdus wittichii (strain DSM 6014 / CCUG 31198 / JCM 15750 / NBRC 105917 / EY 4224 / RW1) (Sphingomonas wittichii) protein is Large ribosomal subunit protein uL30.